A 292-amino-acid polypeptide reads, in one-letter code: Probable E3 ubiquitin-protein ligase RNF144A (292 aa).

The interval 16–236 (PLVSCKLCLG…YDKGPCRNKL (221 aa)) is TRIAD supradomain. The Zn(2+) site is built by cysteine 20, cysteine 23, cysteine 43, cysteine 46, cysteine 111, cysteine 116, cysteine 135, cysteine 138, cysteine 143, cysteine 146, histidine 151, cysteine 156, cysteine 185, and cysteine 188. An RING-type 1 zinc finger spans residues 20-70 (CKLCLGEYTVEQMTTIAQCQCIFCTLCLKQYVELLIKEGLETAISCPDASC). The IBR-type zinc finger occupies 91–156 (QKYKKLQFEK…KANWHPGQGC (66 aa)). Residues 185-214 (CPKCKVYIERDEGCAQMMCKNCKHAFCWYC) form an RING-type 2; atypical zinc finger. Residue cysteine 198 is part of the active site. Residues cysteine 203, cysteine 206, cysteine 211, cysteine 214, histidine 226, and cysteine 232 each contribute to the Zn(2+) site. A helical membrane pass occupies residues 250-270 (VVGIFAGFGLLLLVASPFLLL).

The protein belongs to the RBR family. RNF144 subfamily.

The protein resides in the membrane. The enzyme catalyses [E2 ubiquitin-conjugating enzyme]-S-ubiquitinyl-L-cysteine + [acceptor protein]-L-lysine = [E2 ubiquitin-conjugating enzyme]-L-cysteine + [acceptor protein]-N(6)-ubiquitinyl-L-lysine.. Its pathway is protein modification; protein ubiquitination. E3 ubiquitin-protein ligase which accepts ubiquitin from E2 ubiquitin-conjugating enzymes ube2l3 and ube2l6 in the form of a thioester and then directly transfers the ubiquitin to targeted substrates. This Xenopus tropicalis (Western clawed frog) protein is Probable E3 ubiquitin-protein ligase RNF144A (rnf144a).